Here is a 117-residue protein sequence, read N- to C-terminus: MSNIIKALEQEQMKQDLPKFAPGDTVVVQVKVKEGNRERLQAYEGVVIAIRNRGLHSAFTVRKISNGEGVERTFQTHSPVVDSIEVKRRGAVRRAKLYYLRERSGKSARIKEKLAKK.

This sequence belongs to the bacterial ribosomal protein bL19 family.

This protein is located at the 30S-50S ribosomal subunit interface and may play a role in the structure and function of the aminoacyl-tRNA binding site. This chain is Large ribosomal subunit protein bL19, found in Vibrio vulnificus (strain CMCP6).